Reading from the N-terminus, the 206-residue chain is Protein-methionine-sulfoxide reductase heme-binding subunit MsrQ (206 aa).

Helical transmembrane passes span Val-10–Leu-30, Leu-42–Leu-62, Leu-75–Leu-95, Pro-110–Asn-130, Leu-147–Leu-167, and Glu-169–Met-189.

It belongs to the MsrQ family. In terms of assembly, heterodimer of a catalytic subunit (MsrP) and a heme-binding subunit (MsrQ). Requires FMN as cofactor. Heme b serves as cofactor.

The protein localises to the cell inner membrane. Its function is as follows. Part of the MsrPQ system that repairs oxidized periplasmic proteins containing methionine sulfoxide residues (Met-O), using respiratory chain electrons. Thus protects these proteins from oxidative-stress damage caused by reactive species of oxygen and chlorine generated by the host defense mechanisms. MsrPQ is essential for the maintenance of envelope integrity under bleach stress, rescuing a wide series of structurally unrelated periplasmic proteins from methionine oxidation. MsrQ provides electrons for reduction to the reductase catalytic subunit MsrP, using the quinone pool of the respiratory chain. The chain is Protein-methionine-sulfoxide reductase heme-binding subunit MsrQ from Pseudomonas fluorescens (strain SBW25).